The chain runs to 194 residues: MRQAETARKTNETNISLTLEIDGEGKADIQTDVPFMTHMLDLFTKHGHFNLTVDAKGDTDVDDHHTTEDIGIVLGQMFKEALGDKKGIKRYGSSFVPMDETLAQVVVDLSNRPHLEMRAAFPSQKVGTFDTELVHEFLWKFALEARINLHVIVHYGTNTHHMIEAIFKAMARALDEATTIDPRVKGIPSTKGML.

Belongs to the imidazoleglycerol-phosphate dehydratase family.

It is found in the cytoplasm. The catalysed reaction is D-erythro-1-(imidazol-4-yl)glycerol 3-phosphate = 3-(imidazol-4-yl)-2-oxopropyl phosphate + H2O. It participates in amino-acid biosynthesis; L-histidine biosynthesis; L-histidine from 5-phospho-alpha-D-ribose 1-diphosphate: step 6/9. The sequence is that of Imidazoleglycerol-phosphate dehydratase from Bacillus pumilus (strain SAFR-032).